We begin with the raw amino-acid sequence, 318 residues long: Isoaspartyl peptidase/L-asparaginase (318 aa).

Catalysis depends on T180, which acts as the Nucleophile. Residues 208 to 211 (RVSD) and 229 to 232 (TGIG) each bind substrate.

This sequence belongs to the Ntn-hydrolase family. As to quaternary structure, heterotetramer of two alpha and two beta chains arranged as a dimer of alpha/beta heterodimers. In terms of processing, cleaved into an alpha and beta chain by autocatalysis; this activates the enzyme. The N-terminal residue of the beta subunit is responsible for the nucleophile hydrolase activity.

The enzyme catalyses Cleavage of a beta-linked Asp residue from the N-terminus of a polypeptide.. Functionally, degrades proteins damaged by L-isoaspartyl residue formation (also known as beta-Asp residues). Probably performs the final step in the degradation of the reserve polymer cyanophycin (depolymerizes the building block L-beta-Asp-Arg). Also has L-asparaginase activity. The chain is Isoaspartyl peptidase/L-asparaginase from Nostoc sp. (strain PCC 7120 / SAG 25.82 / UTEX 2576).